Here is a 929-residue protein sequence, read N- to C-terminus: Isoleucine--tRNA ligase (929 aa).

A 'HIGH' region motif is present at residues 58-68 (PYANGDIHIGH). Position 563 (glutamate 563) interacts with L-isoleucyl-5'-AMP. The 'KMSKS' region motif lies at 605 to 609 (KMSKS). Lysine 608 contributes to the ATP binding site. 4 residues coordinate Zn(2+): cysteine 892, cysteine 895, cysteine 912, and cysteine 915.

It belongs to the class-I aminoacyl-tRNA synthetase family. IleS type 1 subfamily. In terms of assembly, monomer. Requires Zn(2+) as cofactor.

It localises to the cytoplasm. It carries out the reaction tRNA(Ile) + L-isoleucine + ATP = L-isoleucyl-tRNA(Ile) + AMP + diphosphate. Catalyzes the attachment of isoleucine to tRNA(Ile). As IleRS can inadvertently accommodate and process structurally similar amino acids such as valine, to avoid such errors it has two additional distinct tRNA(Ile)-dependent editing activities. One activity is designated as 'pretransfer' editing and involves the hydrolysis of activated Val-AMP. The other activity is designated 'posttransfer' editing and involves deacylation of mischarged Val-tRNA(Ile). The chain is Isoleucine--tRNA ligase from Neisseria meningitidis serogroup C (strain 053442).